A 1127-amino-acid chain; its full sequence is Nck-associated protein 1-like (1127 aa).

The interval 638 to 670 (KAKNKKTRKQRQTPRKGEPERDKPGAESHRKNR) is disordered. The span at 639–651 (AKNKKTRKQRQTP) shows a compositional bias: basic residues. Residues 652-666 (RKGEPERDKPGAESH) show a composition bias toward basic and acidic residues. Residues 996 to 1016 (VACLLLIFLAVSLPLLATDPS) traverse the membrane as a helical segment.

The protein belongs to the HEM-1/HEM-2 family. As to quaternary structure, in hematopoietic cells, component of the WAVE2 complex composed of ABI1, CYFIP1/SRA1, NCKAP1L/HEM1 and WASF2/WAVE2. Interacts with ARHGAP4, PIK3C3/VPS34 and PPP1R12A/MYPT1. Interacts with mammalian target of rapamycin complex 2 (mTORC2) components, including MTOR and RICTOR. As to expression, expressed only in cells of hematopoietic origin. Expressed in neutrophils (at protein level). Expressed in T-cells (at protein level).

The protein resides in the cell membrane. It is found in the cytoplasm. In terms of biological role, essential hematopoietic-specific regulator of the actin cytoskeleton. Controls lymphocyte development, activation, proliferation and homeostasis, erythrocyte membrane stability, as well as phagocytosis and migration by neutrophils and macrophages. Component of the WAVE2 complex which signals downstream of RAC to stimulate F-actin polymerization. Required for stabilization and/or translation of the WAVE2 complex proteins in hematopoietic cells. Within the WAVE2 complex, enables the cortical actin network to restrain excessive degranulation and granule release by T-cells. Required for efficient T-lymphocyte and neutrophil migration. Exhibits complex cycles of activation and inhibition to generate waves of propagating the assembly with actin. Also involved in mechanisms WAVE-independent to regulate myosin and actin polymerization during neutrophil chemotaxis. In T-cells, required for proper mechanistic target of rapamycin complex 2 (mTORC2)-dependent AKT phosphorylation, cell proliferation and cytokine secretion, including that of IL2 and TNF. The polypeptide is Nck-associated protein 1-like (Homo sapiens (Human)).